We begin with the raw amino-acid sequence, 440 residues long: Tryptophan aminotransferase-related protein 2 (440 aa).

Residues phenylalanine 7 to leucine 26 traverse the membrane as a helical segment. Pyridoxal 5'-phosphate contacts are provided by residues tyrosine 112, serine 154–threonine 155, asparagine 222, aspartate 242–tyrosine 245, threonine 265–lysine 268, and arginine 276. Lysine 268 is subject to N6-(pyridoxal phosphate)lysine.

It belongs to the alliinase family. The cofactor is pyridoxal 5'-phosphate. Expressed in roots, cotyledons and in the apical parts of hypocotyls. In roots, restricted to the provasculature of meristematic regions. Detected on the inner side of the apical hooks.

It localises to the membrane. It catalyses the reaction L-tryptophan + 2-oxoglutarate = indole-3-pyruvate + L-glutamate. The catalysed reaction is L-tryptophan + pyruvate = indole-3-pyruvate + L-alanine. The protein operates within plant hormone metabolism; auxin biosynthesis. Its activity is regulated as follows. Inhibited by L-kynurenine. Its function is as follows. Involved in auxin production. Both TAA1 and TAR2 are required for maintaining proper auxin levels in roots, while TAA1, TAR1 and TAR2 are required for proper embryo patterning. Involved in the maintenance of the root stem cell niches. The chain is Tryptophan aminotransferase-related protein 2 (TAR2) from Arabidopsis thaliana (Mouse-ear cress).